A 121-amino-acid polypeptide reads, in one-letter code: Large ribosomal subunit protein uL22 (121 aa).

It belongs to the universal ribosomal protein uL22 family. In terms of assembly, part of the 50S ribosomal subunit.

In terms of biological role, this protein binds specifically to 23S rRNA; its binding is stimulated by other ribosomal proteins, e.g. L4, L17, and L20. It is important during the early stages of 50S assembly. It makes multiple contacts with different domains of the 23S rRNA in the assembled 50S subunit and ribosome. The globular domain of the protein is located near the polypeptide exit tunnel on the outside of the subunit, while an extended beta-hairpin is found that lines the wall of the exit tunnel in the center of the 70S ribosome. In Pseudarthrobacter chlorophenolicus (strain ATCC 700700 / DSM 12829 / CIP 107037 / JCM 12360 / KCTC 9906 / NCIMB 13794 / A6) (Arthrobacter chlorophenolicus), this protein is Large ribosomal subunit protein uL22.